A 397-amino-acid chain; its full sequence is Homoserine O-acetyltransferase (397 aa).

One can recognise an AB hydrolase-1 domain in the interval 58–368 (NAVLVLHALT…EAKWGHDAFL (311 aa)). S164 (nucleophile) is an active-site residue. Position 233 (R233) interacts with substrate. Active-site residues include D331 and H364. D365 is a binding site for substrate.

The protein belongs to the AB hydrolase superfamily. MetX family. As to quaternary structure, homodimer.

The protein localises to the cytoplasm. The enzyme catalyses L-homoserine + acetyl-CoA = O-acetyl-L-homoserine + CoA. The protein operates within amino-acid biosynthesis; L-methionine biosynthesis via de novo pathway; O-acetyl-L-homoserine from L-homoserine: step 1/1. Functionally, transfers an acetyl group from acetyl-CoA to L-homoserine, forming acetyl-L-homoserine. The sequence is that of Homoserine O-acetyltransferase from Solidesulfovibrio magneticus (strain ATCC 700980 / DSM 13731 / RS-1) (Desulfovibrio magneticus).